The primary structure comprises 215 residues: Large ribosomal subunit protein uL16 (215 aa).

Belongs to the universal ribosomal protein uL16 family. As to quaternary structure, component of the large ribosomal subunit.

The protein localises to the cytoplasm. Its function is as follows. Component of the large ribosomal subunit. Plays a role in the formation of actively translating ribosomes. Plays a role in the embryonic brain development. This chain is Large ribosomal subunit protein uL16, found in Danio rerio (Zebrafish).